The primary structure comprises 658 residues: Cysteine-rich receptor-like protein kinase 14 (658 aa).

An N-terminal signal peptide occupies residues 1–22 (MELKNLFPIFWFVLVGFAVVSA). 2 consecutive Gnk2-homologous domains span residues 23–125 (QECG…NSSF) and 131–240 (AEPH…LFPF). The Extracellular segment spans residues 23–277 (QECGKTGFFV…ATKKGSITIS (255 aa)). Residues N51, N60, N102, N122, and N146 are each glycosylated (N-linked (GlcNAc...) asparagine). Residues 278–298 (IGIVWAIIIPTVIVVFLVLLA) form a helical membrane-spanning segment. Topologically, residues 299–658 (LGFVVYRRRK…DVTITDFEPR (360 aa)) are cytoplasmic. Positions 337-614 (FSESNIIGRG…NMMLINNSYV (278 aa)) constitute a Protein kinase domain. Residues 343-351 (IGRGGFGEV) and K364 contribute to the ATP site. At Y409 the chain carries Phosphotyrosine. D461 acts as the Proton acceptor in catalysis. S465 is modified (phosphoserine). Phosphothreonine is present on T501. Residue Y509 is modified to Phosphotyrosine.

Belongs to the protein kinase superfamily. Ser/Thr protein kinase family. CRK subfamily.

The protein localises to the membrane. It carries out the reaction L-seryl-[protein] + ATP = O-phospho-L-seryl-[protein] + ADP + H(+). It catalyses the reaction L-threonyl-[protein] + ATP = O-phospho-L-threonyl-[protein] + ADP + H(+). This Arabidopsis thaliana (Mouse-ear cress) protein is Cysteine-rich receptor-like protein kinase 14 (CRK14).